Here is a 273-residue protein sequence, read N- to C-terminus: Alcohol dehydrogenase-related 31 kDa protein (273 aa).

11–34 (YVADCGGIALETCKVLMTKNIAKL) provides a ligand contact to NAD(+). Residue S139 participates in substrate binding. Y152 acts as the Proton acceptor in catalysis.

This sequence belongs to the short-chain dehydrogenases/reductases (SDR) family.

This chain is Alcohol dehydrogenase-related 31 kDa protein (Adhr), found in Drosophila immigrans (Fruit fly).